The sequence spans 551 residues: Glucose-6-phosphate isomerase (551 aa).

Glu-349 acts as the Proton donor in catalysis. Residues His-378 and Lys-480 contribute to the active site.

The protein belongs to the GPI family.

The protein localises to the cytoplasm. The enzyme catalyses alpha-D-glucose 6-phosphate = beta-D-fructose 6-phosphate. It participates in carbohydrate biosynthesis; gluconeogenesis. Its pathway is carbohydrate degradation; glycolysis; D-glyceraldehyde 3-phosphate and glycerone phosphate from D-glucose: step 2/4. Functionally, catalyzes the reversible isomerization of glucose-6-phosphate to fructose-6-phosphate. In Parasynechococcus marenigrum (strain WH8102), this protein is Glucose-6-phosphate isomerase.